A 618-amino-acid polypeptide reads, in one-letter code: UvrABC system protein C (618 aa).

Positions 19–97 (SEPGIYRMLD…IKALRPKYNV (79 aa)) constitute a GIY-YIG domain. Residues 208-243 (QIILDALAERMKQAVNQLNFEEAAVLRDQIKNLRLI) form the UVR domain.

The protein belongs to the UvrC family. In terms of assembly, interacts with UvrB in an incision complex.

Its subcellular location is the cytoplasm. Its function is as follows. The UvrABC repair system catalyzes the recognition and processing of DNA lesions. UvrC both incises the 5' and 3' sides of the lesion. The N-terminal half is responsible for the 3' incision and the C-terminal half is responsible for the 5' incision. The sequence is that of UvrABC system protein C from Legionella pneumophila (strain Paris).